A 231-amino-acid chain; its full sequence is Eukaryotic translation initiation factor 4E-1 (231 aa).

2 EIF4G-binding regions span residues 56–59 (HPLE) and 66–102 (FDNS…NNIH). MRNA-binding positions include 74–79 (RQTAWG), Lys-106, and 124–125 (WE). Cysteines 129 and 167 form a disulfide. The EIF4G-binding stretch occupies residues 150-159 (YTLLAMIGHQ). Residues 174 to 179 (RAKGEK) and 219 to 223 (KRLDR) contribute to the mRNA site.

This sequence belongs to the eukaryotic initiation factor 4E family. EIF4F is a multi-subunit complex, the composition of which varies with external and internal environmental conditions. It is composed of at least EIF4A, EIF4E and EIF4G. EIF4E is also known to interact with other partners. In higher plants two isoforms of EIF4F have been identified, named isoform EIF4F and isoform EIF(iso)4F. Isoform EIF4F has subunits p220 and p26, whereas isoform EIF(iso)4F has subunits p82 and p28. As to quaternary structure, (Microbial infection) Interacts with potyvirus viral genome-linked protein (VPg); this interaction is possible in susceptible hosts but impaired in resistant plants. Post-translationally, according to the redox status, the Cys-129-Cys-167 disulfide bridge may have a role in regulating protein function by affecting its ability to bind capped mRNA.

The protein localises to the nucleus. It is found in the cytoplasm. Component of the protein complex eIF4F, which is involved in the recognition of the mRNA cap, ATP-dependent unwinding of 5'-terminal secondary structure and recruitment of mRNA to the ribosome. Recognizes and binds the 7-methylguanosine-containing mRNA cap during an early step in the initiation of protein synthesis and facilitates ribosome binding by inducing the unwinding of the mRNAs secondary structures. Key component of recessive resistance to potyviruses. Its function is as follows. (Microbial infection) Susceptibility host factor required for viral infection (e.g. pepper mottle virus (PepMoV), potato virus Y (PVY) and tobacco etch virus (TEV)) by recruiting viral RNAs to the host ribosomal complex via an interaction with viral genome-linked protein (VPg). This is Eukaryotic translation initiation factor 4E-1 from Solanum habrochaites (Wild tomato).